We begin with the raw amino-acid sequence, 523 residues long: Sensory neuron membrane protein 1 (523 aa).

The Cytoplasmic segment spans residues 1–11 (MQLPKELKYAA). Residues 12 to 32 (IAGGVALFGLIFGWVLFPTIL) traverse the membrane as a helical segment. At 33-458 (KSQLKKEMAL…HQLFIPKRVV (426 aa)) the chain is on the extracellular side. Residues asparagine 67 and asparagine 229 are each glycosylated (N-linked (GlcNAc...) asparagine). Intrachain disulfides connect cysteine 268-cysteine 333, cysteine 297-cysteine 352, and cysteine 335-cysteine 341. Residue asparagine 440 is glycosylated (N-linked (GlcNAc...) asparagine). Residues 459–479 (GVLRWWVVSFGSLGAVIGIVF) form a helical membrane-spanning segment. Residues 480 to 523 (HFRDHIMRLAVSGDTKVSKVTPEEPEQKDISVIGQAQEPAKVNI) lie on the Cytoplasmic side of the membrane.

It belongs to the CD36 family. In terms of tissue distribution, detected in sensory neurons in the antenna.

It localises to the cell membrane. In terms of biological role, plays an olfactory role that is not restricted to pheromone sensitivity. This chain is Sensory neuron membrane protein 1, found in Heliothis virescens (Tobacco budworm moth).